A 324-amino-acid chain; its full sequence is Elongation factor Ts, mitochondrial (324 aa).

A mitochondrion-targeting transit peptide spans 1–44; that stretch reads MSLLRSLRFFPVACTGRSARAVLLQPSQPWHTLHAGPSLSSSAS. 2 positions are modified to N6-succinyllysine: K75 and K132. A Phosphoserine modification is found at S269.

The protein belongs to the EF-Ts family.

It localises to the mitochondrion. In terms of biological role, associates with the EF-Tu.GDP complex and induces the exchange of GDP to GTP. It remains bound to the aminoacyl-tRNA.EF-Tu.GTP complex up to the GTP hydrolysis stage on the ribosome. The sequence is that of Elongation factor Ts, mitochondrial (Tsfm) from Rattus norvegicus (Rat).